Consider the following 151-residue polypeptide: Putative pre-16S rRNA nuclease (151 aa).

The protein belongs to the YqgF nuclease family.

It localises to the cytoplasm. Its function is as follows. Could be a nuclease involved in processing of the 5'-end of pre-16S rRNA. The polypeptide is Putative pre-16S rRNA nuclease (Onion yellows phytoplasma (strain OY-M)).